Consider the following 169-residue polypeptide: Disulfide bond formation protein B (169 aa).

Residues 1 to 14 are Cytoplasmic-facing; sequence MNNLTLSLRRERRL. A helical membrane pass occupies residues 15–31; it reads LVLLALVCLALLAGALY. Residues 32–49 are Periplasmic-facing; sequence LQYVKNEDPCPLCIIQRY. A disulfide bond links Cys41 and Cys44. The chain crosses the membrane as a helical span at residues 50 to 64; that stretch reads FFVLIAVFAFIGAGM. Residues 65 to 71 lie on the Cytoplasmic side of the membrane; that stretch reads ASGAGVA. Residues 72–89 traverse the membrane as a helical segment; that stretch reads VTEALIVLSAAAGVGTAA. Topologically, residues 90-144 are periplasmic; the sequence is RHLYVQLNPGFSCGFDALQPVVDSLPPARWLPGVFKVAGLCETVYPPIFGILLPG. A disulfide bridge links Cys102 with Cys130. Residues 145–163 traverse the membrane as a helical segment; the sequence is WALIAFVLIAVPVAVSLLR. Residues 164–169 lie on the Cytoplasmic side of the membrane; sequence HRGRLR.

It belongs to the DsbB family.

The protein resides in the cell inner membrane. In terms of biological role, required for disulfide bond formation in some periplasmic proteins. Acts by oxidizing the DsbA protein. This chain is Disulfide bond formation protein B, found in Burkholderia mallei (strain ATCC 23344).